A 223-amino-acid chain; its full sequence is Ribonuclease T (223 aa).

The Exonuclease domain maps to 20 to 195; sequence VVIDVETAGF…YDTERTAELF (176 aa). Asp-23, Glu-25, His-182, and Asp-187 together coordinate Mg(2+). The active-site Proton donor/acceptor is the His-182.

This sequence belongs to the RNase T family. Homodimer. Requires Mg(2+) as cofactor.

Its function is as follows. Trims short 3' overhangs of a variety of RNA species, leaving a one or two nucleotide 3' overhang. Responsible for the end-turnover of tRNA: specifically removes the terminal AMP residue from uncharged tRNA (tRNA-C-C-A). Also appears to be involved in tRNA biosynthesis. In Photobacterium profundum (strain SS9), this protein is Ribonuclease T.